Consider the following 455-residue polypeptide: Argininosuccinate lyase (455 aa).

The protein belongs to the lyase 1 family. Argininosuccinate lyase subfamily.

It localises to the cytoplasm. The catalysed reaction is 2-(N(omega)-L-arginino)succinate = fumarate + L-arginine. It functions in the pathway amino-acid biosynthesis; L-arginine biosynthesis; L-arginine from L-ornithine and carbamoyl phosphate: step 3/3. This Shewanella sp. (strain MR-7) protein is Argininosuccinate lyase.